The following is a 509-amino-acid chain: Activin receptor type-1 (509 aa).

The N-terminal stretch at 1 to 20 (MVDGVMILPVLVMIAFPFPS) is a signal peptide. Topologically, residues 21–123 (MEDEKPKVNP…FPGTQNFHLE (103 aa)) are extracellular. Asn-102 is a glycosylation site (N-linked (GlcNAc...) asparagine). The chain crosses the membrane as a helical span at residues 124–146 (VGLIILSVVFAVCLLACLLGVAL). Over 147 to 509 (RKFKRRNQER…NSLDKLKTDC (363 aa)) the chain is Cytoplasmic. Residues 178-207 (STLADLLDHSCTSGSGSGLPFLVQRTVARQ) form the GS domain. In terms of domain architecture, Protein kinase spans 208–502 (ITLLECVGKG…KTLTKIDNSL (295 aa)). ATP contacts are provided by residues 214-222 (VGKGRYGEV) and Lys-235. Asp-336 acts as the Proton acceptor in catalysis. Ser-501 is subject to Phosphoserine.

The protein belongs to the protein kinase superfamily. TKL Ser/Thr protein kinase family. TGFB receptor subfamily. Interacts with FKBP1A. Interacts with FCHO1. Interacts with CLU. Interacts with type II receptors AMHR2 and ACVR2A. Interacts with BMP7. Interacts with BMP9. Interacts with BMP6 (when glycosylated); the interaction may induce HAMP expression. Interacts with TSC22D1/TSC-22. Requires Mg(2+) as cofactor. It depends on Mn(2+) as a cofactor.

It is found in the membrane. It catalyses the reaction L-threonyl-[receptor-protein] + ATP = O-phospho-L-threonyl-[receptor-protein] + ADP + H(+). It carries out the reaction L-seryl-[receptor-protein] + ATP = O-phospho-L-seryl-[receptor-protein] + ADP + H(+). Bone morphogenetic protein (BMP) type I receptor that is involved in a wide variety of biological processes, including bone, heart, cartilage, nervous, and reproductive system development and regulation. As a type I receptor, forms heterotetrameric receptor complexes with the type II receptors AMHR2, ACVR2A ors ACVR2B. Upon binding of ligands such as BMP7 or BMP9 to the heteromeric complexes, type II receptors transphosphorylate ACVR1 intracellular domain. In turn, ACVR1 kinase domain is activated and subsequently phosphorylates SMAD1/5/8 proteins that transduce the signal. In addition to its role in mediating BMP pathway-specific signaling, suppresses TGFbeta/activin pathway signaling by interfering with the binding of activin to its type II receptor. Besides canonical SMAD signaling, can activate non-canonical signaling pathways. May promote the expression of HAMP, potentially via its interaction with BMP6. The polypeptide is Activin receptor type-1 (ACVR1) (Bos taurus (Bovine)).